Here is a 350-residue protein sequence, read N- to C-terminus: UDP-N-acetylenolpyruvoylglucosamine reductase (350 aa).

The region spanning 25–194 is the FAD-binding PCMH-type domain; it reads VGPVARRLIT…LDVGGRSAPL (170 aa). Arg-166 is an active-site residue. The active-site Proton donor is the Ser-243. Residue Glu-342 is part of the active site.

Belongs to the MurB family. FAD serves as cofactor.

It is found in the cytoplasm. It catalyses the reaction UDP-N-acetyl-alpha-D-muramate + NADP(+) = UDP-N-acetyl-3-O-(1-carboxyvinyl)-alpha-D-glucosamine + NADPH + H(+). It functions in the pathway cell wall biogenesis; peptidoglycan biosynthesis. In terms of biological role, cell wall formation. This is UDP-N-acetylenolpyruvoylglucosamine reductase from Mycobacterium sp. (strain MCS).